The primary structure comprises 580 residues: DNA ligase 1 (580 aa).

Glu-245 lines the ATP pocket. The active-site N6-AMP-lysine intermediate is Lys-247. Arg-252, Arg-267, Glu-297, Phe-343, Arg-420, and Lys-426 together coordinate ATP.

Belongs to the ATP-dependent DNA ligase family. Mg(2+) is required as a cofactor.

It carries out the reaction ATP + (deoxyribonucleotide)n-3'-hydroxyl + 5'-phospho-(deoxyribonucleotide)m = (deoxyribonucleotide)n+m + AMP + diphosphate.. Its function is as follows. DNA ligase that seals nicks in double-stranded DNA during DNA replication, DNA recombination and DNA repair. The chain is DNA ligase 1 from Methanosarcina acetivorans (strain ATCC 35395 / DSM 2834 / JCM 12185 / C2A).